Here is a 460-residue protein sequence, read N- to C-terminus: UDP-N-acetylmuramate--L-alanine ligase (460 aa).

118-124 lines the ATP pocket; it reads GTHGKTT.

Belongs to the MurCDEF family.

It is found in the cytoplasm. The enzyme catalyses UDP-N-acetyl-alpha-D-muramate + L-alanine + ATP = UDP-N-acetyl-alpha-D-muramoyl-L-alanine + ADP + phosphate + H(+). It participates in cell wall biogenesis; peptidoglycan biosynthesis. Its function is as follows. Cell wall formation. This Gloeobacter violaceus (strain ATCC 29082 / PCC 7421) protein is UDP-N-acetylmuramate--L-alanine ligase.